Reading from the N-terminus, the 339-residue chain is Uridylate kinase PUMPKIN, chloroplastic (339 aa).

A chloroplast-targeting transit peptide spans 1-53 (MAIPLPLTSCSPISTSSSISRTSFVPLTLRNRTFFSNQNYSRRVLISCSSSLS). A compositionally biased stretch (low complexity) spans 52–79 (LSSDNGSSPDSMNGNGNGNGSSLNGQSS). A disordered region spans residues 52-89 (LSSDNGSSPDSMNGNGNGNGSSLNGQSSFPRLPSFDGT). 102–105 (KVSG) contacts ATP. An involved in allosteric activation by GTP region spans residues 110 to 115 (GDEEQN). G144 provides a ligand contact to UMP. ATP contacts are provided by G145 and R149. D165 contacts UMP. Residues 180–184 (QATME) and 189–191 (PTR) contribute to the ATP site. 226–233 (TGNPFFTT) provides a ligand contact to UMP. Positions 253, 259, and 262 each coordinate ATP.

Belongs to the UMP kinase family. In terms of assembly, homomultimer. Homohexamer. Forms RNA-containing megadalton-sized complexes. As to expression, expressed exclusively in leaves, but not in roots.

It localises to the plastid. The protein resides in the chloroplast stroma. The enzyme catalyses UMP + ATP = UDP + ADP. It participates in pyrimidine metabolism; CTP biosynthesis via de novo pathway; UDP from UMP (UMPK route): step 1/1. In terms of biological role, catalyzes the reversible phosphorylation of UMP to UDP. Required for specific post-transcriptional processes of many plastid transcripts (e.g. PSI (PsaA, PsaF), PSII (D1, CP43, CP47), Cytochrome b(6)f (Cytb(6)), ATP synthase (AtpC), LHCs (LHCa3, LHCb2), and NDH (NdhH)), thus being essential for retaining photosynthetic activity in chloroplasts. Associates with group II introns of the plastid transcripts trnG-UCC, trnV-UAC, petB, petD and ndhA to stabilize corresponding precursor RNAs. This Arabidopsis thaliana (Mouse-ear cress) protein is Uridylate kinase PUMPKIN, chloroplastic.